Here is a 363-residue protein sequence, read N- to C-terminus: 5-hydroxytryptamine receptor 1E (363 aa).

Over 1 to 21 (MNITNCTTEASMAIRPKTITE) the chain is Extracellular. 2 N-linked (GlcNAc...) asparagine glycosylation sites follow: Asn-2 and Asn-5. Residues 22–45 (KMLICMTLVVITTLTTLLNLAVIM) form a helical membrane-spanning segment. The Cytoplasmic portion of the chain corresponds to 46–59 (AIGTTKKLHQPANY). Residues 60–84 (LICSLAVTDLLVAVLVMPLSIIYIV) traverse the membrane as a helical segment. The Extracellular segment spans residues 85–92 (MDRWKLGY). A helical membrane pass occupies residues 93 to 118 (FLCEVWLSVDMTCCTCSILHLCVIAL). Cys-95 and Cys-173 form a disulfide bridge. 2 residues coordinate serotonin: Asp-102 and Cys-106. The short motif at 119 to 121 (DRY) is the DRY motif; important for ligand-induced conformation changes element. Over 119-138 (DRYWAITNAIEYARKRTAKR) the chain is Cytoplasmic. Residues 139-157 (AALMILTVWTISIFISMPP) traverse the membrane as a helical segment. The Extracellular segment spans residues 158–179 (LFWRSHRRLSPPPSQCTIQHDH). Residues 180–203 (VIYTIYSTLGAFYIPLTLILILYY) form a helical membrane-spanning segment. Residues 204 to 291 (RIYHAAKSLY…SSTRERKAAR (88 aa)) lie on the Cytoplasmic side of the membrane. A helical membrane pass occupies residues 292–316 (ILGLILGAFILSWLPFFIKELIVGL). Topologically, residues 317-322 (SIYTVS) are extracellular. The helical transmembrane segment at 323 to 345 (SEVADFLTWLGYVNSLINPLLYT) threads the bilayer. The NPxxY motif; important for ligand-induced conformation changes and signaling motif lies at 340–344 (NPLLY). Residues 346–363 (SFNEDFKLAFKKLIRCRE) lie on the Cytoplasmic side of the membrane.

The protein belongs to the G-protein coupled receptor 1 family.

The protein resides in the cell membrane. Functionally, G-protein coupled receptor for 5-hydroxytryptamine (serotonin). Also functions as a receptor for various alkaloids and psychoactive substances. Ligand binding causes a conformation change that triggers signaling via guanine nucleotide-binding proteins (G proteins) and modulates the activity of downstream effectors, such as adenylate cyclase. HTR1E is coupled to G(i)/G(o) G alpha proteins and mediates inhibitory neurotransmission by inhibiting adenylate cyclase activity. This is 5-hydroxytryptamine receptor 1E (HTR1E) from Pan troglodytes (Chimpanzee).